We begin with the raw amino-acid sequence, 303 residues long: Bifunctional protein FolD (303 aa).

NADP(+) contacts are provided by residues Gly-165–Ser-167, Ser-190, and Ile-231.

This sequence belongs to the tetrahydrofolate dehydrogenase/cyclohydrolase family. Homodimer.

It catalyses the reaction (6R)-5,10-methylene-5,6,7,8-tetrahydrofolate + NADP(+) = (6R)-5,10-methenyltetrahydrofolate + NADPH. The enzyme catalyses (6R)-5,10-methenyltetrahydrofolate + H2O = (6R)-10-formyltetrahydrofolate + H(+). The protein operates within one-carbon metabolism; tetrahydrofolate interconversion. Its function is as follows. Catalyzes the oxidation of 5,10-methylenetetrahydrofolate to 5,10-methenyltetrahydrofolate and then the hydrolysis of 5,10-methenyltetrahydrofolate to 10-formyltetrahydrofolate. The sequence is that of Bifunctional protein FolD from Prochlorococcus marinus (strain NATL1A).